A 468-amino-acid polypeptide reads, in one-letter code: GDNF family receptor alpha-1 (468 aa).

A signal peptide spans 1–24 (MFLATLYFVLPLLDLLMSAEVSGG). 3 tandem repeats follow at residues 25–113 (DRLD…LQGN), 150–238 (KGNN…YEER), and 239–342 (ERPN…KNAI). A disulfide bridge links cysteine 36 with cysteine 42. Asparagine 59 carries N-linked (GlcNAc...) asparagine glycosylation. Intrachain disulfides connect cysteine 154–cysteine 214, cysteine 161–cysteine 167, cysteine 178–cysteine 192, cysteine 187–cysteine 233, cysteine 216–cysteine 221, cysteine 243–cysteine 313, cysteine 250–cysteine 256, cysteine 267–cysteine 285, cysteine 277–cysteine 337, and cysteine 315–cysteine 325. N-linked (GlcNAc...) asparagine glycosylation is found at asparagine 347 and asparagine 406. Serine 430 carries GPI-anchor amidated serine lipidation. The propeptide at 431–468 (HITTKSMAAPPSCGLSSLPVMVFTALAALLSVSLAETS) is removed in mature form.

This sequence belongs to the GDNFR family. Interacts with GDNF ligand and RET: forms a 2:2:2 ternary complex composed of GDNF ligand, GFRA1 and RET receptor. Interacts with SORL1, either alone or in complex with GDNF. Interaction between SORL1 and GFRA1 leads to GFRA1 internalization, but not degradation. Expressed in the brain, in hippocampal neurons (at protein level). Isoform 1 and isoform 2 are expressed in heart, brain, lung, liver, kidney and testis.

Its subcellular location is the cell membrane. The protein localises to the golgi apparatus. The protein resides in the trans-Golgi network. It localises to the endosome. It is found in the multivesicular body. Coreceptor for GDNF, a neurotrophic factor that enhances survival and morphological differentiation of dopaminergic neurons and increases their high-affinity dopamine uptake. GDNF-binding leads to autophosphorylation and activation of the RET receptor. This chain is GDNF family receptor alpha-1 (Gfra1), found in Mus musculus (Mouse).